The following is a 476-amino-acid chain: Bifunctional protein GlmU (476 aa).

The tract at residues 1-232 (MGDLAAIILA…PVEVMGVNDR (232 aa)) is pyrophosphorylase. Residues 9–12 (LAAG), K23, Q75, and 80–81 (GT) contribute to the UDP-N-acetyl-alpha-D-glucosamine site. Position 105 (D105) interacts with Mg(2+). The UDP-N-acetyl-alpha-D-glucosamine site is built by G142, E157, N172, and N230. Residue N230 participates in Mg(2+) binding. Residues 233–253 (AQLAEAGRFARQRINRELMLD) are linker. The interval 254–476 (GVTIVDPAAT…DGWKLKQRDQ (223 aa)) is N-acetyltransferase. Residues R353 and K371 each coordinate UDP-N-acetyl-alpha-D-glucosamine. Residue H383 is the Proton acceptor of the active site. UDP-N-acetyl-alpha-D-glucosamine-binding residues include Y386 and N397. Residues 406 to 407 (NY), S425, A443, and R460 each bind acetyl-CoA.

The protein in the N-terminal section; belongs to the N-acetylglucosamine-1-phosphate uridyltransferase family. This sequence in the C-terminal section; belongs to the transferase hexapeptide repeat family. In terms of assembly, homotrimer. Mg(2+) serves as cofactor.

It localises to the cytoplasm. The catalysed reaction is alpha-D-glucosamine 1-phosphate + acetyl-CoA = N-acetyl-alpha-D-glucosamine 1-phosphate + CoA + H(+). It carries out the reaction N-acetyl-alpha-D-glucosamine 1-phosphate + UTP + H(+) = UDP-N-acetyl-alpha-D-glucosamine + diphosphate. It functions in the pathway nucleotide-sugar biosynthesis; UDP-N-acetyl-alpha-D-glucosamine biosynthesis; N-acetyl-alpha-D-glucosamine 1-phosphate from alpha-D-glucosamine 6-phosphate (route II): step 2/2. Its pathway is nucleotide-sugar biosynthesis; UDP-N-acetyl-alpha-D-glucosamine biosynthesis; UDP-N-acetyl-alpha-D-glucosamine from N-acetyl-alpha-D-glucosamine 1-phosphate: step 1/1. It participates in bacterial outer membrane biogenesis; LPS lipid A biosynthesis. Its function is as follows. Catalyzes the last two sequential reactions in the de novo biosynthetic pathway for UDP-N-acetylglucosamine (UDP-GlcNAc). The C-terminal domain catalyzes the transfer of acetyl group from acetyl coenzyme A to glucosamine-1-phosphate (GlcN-1-P) to produce N-acetylglucosamine-1-phosphate (GlcNAc-1-P), which is converted into UDP-GlcNAc by the transfer of uridine 5-monophosphate (from uridine 5-triphosphate), a reaction catalyzed by the N-terminal domain. The sequence is that of Bifunctional protein GlmU from Geobacter metallireducens (strain ATCC 53774 / DSM 7210 / GS-15).